The primary structure comprises 284 residues: MEMO1 family protein M1425_2054 (284 aa).

It belongs to the MEMO1 family.

This Saccharolobus islandicus (strain M.14.25 / Kamchatka #1) (Sulfolobus islandicus) protein is MEMO1 family protein M1425_2054.